Reading from the N-terminus, the 511-residue chain is Probable DNA ligase (511 aa).

Glutamate 208 lines the ATP pocket. Residue lysine 210 is the N6-AMP-lysine intermediate of the active site. Residues arginine 215, arginine 230, glutamate 259, phenylalanine 299, arginine 377, and lysine 383 each coordinate ATP.

This sequence belongs to the ATP-dependent DNA ligase family. Mg(2+) serves as cofactor.

The enzyme catalyses ATP + (deoxyribonucleotide)n-3'-hydroxyl + 5'-phospho-(deoxyribonucleotide)m = (deoxyribonucleotide)n+m + AMP + diphosphate.. In terms of biological role, DNA ligase that seals nicks in double-stranded DNA during DNA replication, DNA recombination and DNA repair. The sequence is that of Probable DNA ligase from Streptomyces griseus subsp. griseus (strain JCM 4626 / CBS 651.72 / NBRC 13350 / KCC S-0626 / ISP 5235).